Here is a 214-residue protein sequence, read N- to C-terminus: Probable nicotinate-nucleotide adenylyltransferase (214 aa).

It belongs to the NadD family.

It carries out the reaction nicotinate beta-D-ribonucleotide + ATP + H(+) = deamido-NAD(+) + diphosphate. Its pathway is cofactor biosynthesis; NAD(+) biosynthesis; deamido-NAD(+) from nicotinate D-ribonucleotide: step 1/1. Catalyzes the reversible adenylation of nicotinate mononucleotide (NaMN) to nicotinic acid adenine dinucleotide (NaAD). The protein is Probable nicotinate-nucleotide adenylyltransferase of Pseudomonas aeruginosa (strain UCBPP-PA14).